Here is a 1122-residue protein sequence, read N- to C-terminus: Protein CAF130 (1122 aa).

A disordered region spans residues 1–24 (MTKKKAATNYAERQNLASEDSSGD). A compositionally biased stretch (polar residues) spans 11 to 24 (AERQNLASEDSSGD). Phosphoserine is present on Ser-1042.

As to quaternary structure, subunit of the 1.0 MDa CCR4-NOT core complex that contains CCR4, CAF1, NOT1, NOT2, NOT3, NOT4, NOT5, CAF40 and CAF130. In the complex interacts with NOT1. The core complex probably is part of a less characterized 1.9 MDa CCR4-NOT complex.

It localises to the cytoplasm. The protein localises to the nucleus. Its function is as follows. Acts as a component of the CCR4-NOT core complex, which in the nucleus seems to be a general transcription factor, and in the cytoplasm the major mRNA deadenylase involved in mRNA turnover. This is Protein CAF130 (CAF130) from Saccharomyces cerevisiae (strain ATCC 204508 / S288c) (Baker's yeast).